The chain runs to 1120 residues: MVSRFYQIPGTHRPSSAISSSNESSSLLSARRISQTYFNYQATPECQKVSSKYDPDNPNKDKLGTYDGVFVPTALNVLSILMFLRFGFILGQLGIICTIGLLLLSYTINLLTTLSISAISTNGTVRGGGAYYMISRSLGPEFGGSIGLVFFLGQVFNAGMNAVGIIEPLLYNLGYSAQGEPPAALGELLPRGHWHEFTYATVILFLCFSVAFVGSQTVSRAGNILFLVLAASIFSIPLSALIRSPFTEGGISYTGPSWQTFHDNLLPHLTKGAAGSLLKGKETFNDLFGVFFPATAGIFAGAGMSSELRKPSKSIPKGTLWGLLFTFICYAVVVFSMGCSIPRRSLYDEVQIIQTISSVQWVIFMGEMATSLFSIIVGMLGAAYVLEAIAKDNIIPGLEIFAHSPLYSLIFTWILTQLCLFSDVNKIATFITMTFLMTFVVMNLACFLLGISSAPNFRPSFKYFNRYTTAIGALLSVVAMLIVDGISASVLFLAMILLFLFIHYFSPPKSWGDVSQSLIYHQVRKYLLRLRQDNIKYWRPQILLFVDNPRTSWNLIRFCNHLKKGGLYILGHVAVTADFPKQLNELKTQQKAWMKIRDMAAIKAFVQVGTGPSLIWGIRNVFIGSGLGGMKPNITVVGFFDLESYRKHIPQSRSQNNLQKQVEIKATVPRSTCSDVKINVPLPTDECKNETKVNVQQWVQIVEDLSLMQSNIAIAHGFKNLEIPNKRDSCFPKKTIDLYPIQMCGKVEAKGDQPAAITTNFDTYTLILQLAAILVTVPEWKRTHSLRVILFVEQEYHRTNETQRMKKLLQVLRIDAEVLVVSLDQFRVYNTIVKGDPIVFDYVNSKLADNEWWKDLVEARDTLKPKRRFSTIEPQTIAKQFTQSRKYTSGVQKLGVSFTMNTRMPTNRIDTPCESEDSDLDTDLTSIRDAFSASTNISVGKDLTTKSKTGSDRTNLLVKNLQSDVSTQSLRPVFSSNTLPRTRVVEDGTGEQPTLIPIAEPDLSNGNGTGSGIGNGNKLKKPVLPELSPCCSKDSLVTAMQNLGFNDLPSTAQHLVLNDVMTQMSKSSDLIFSTLPVPALGTHEDHDASLQYVEDLDIWLEGLPPCMLINSQTMTVTTAL.

The tract at residues 1 to 21 (MVSRFYQIPGTHRPSSAISSS) is disordered. Residues 1–62 (MVSRFYQIPG…YDPDNPNKDK (62 aa)) lie on the Cytoplasmic side of the membrane. The residue at position 34 (serine 34) is a Phosphoserine. A helical membrane pass occupies residues 63-83 (LGTYDGVFVPTALNVLSILMF). The Vacuolar segment spans residues 84 to 85 (LR). A helical transmembrane segment spans residues 86–106 (FGFILGQLGIICTIGLLLLSY). Residues 107–145 (TINLLTTLSISAISTNGTVRGGGAYYMISRSLGPEFGGS) are Cytoplasmic-facing. A helical transmembrane segment spans residues 146–166 (IGLVFFLGQVFNAGMNAVGII). Residues 167-193 (EPLLYNLGYSAQGEPPAALGELLPRGH) lie on the Vacuolar side of the membrane. The chain crosses the membrane as a helical span at residues 194–214 (WHEFTYATVILFLCFSVAFVG). Topologically, residues 215 to 221 (SQTVSRA) are cytoplasmic. A helical membrane pass occupies residues 222–242 (GNILFLVLAASIFSIPLSALI). The Vacuolar segment spans residues 243–283 (RSPFTEGGISYTGPSWQTFHDNLLPHLTKGAAGSLLKGKET). The chain crosses the membrane as a helical span at residues 284–304 (FNDLFGVFFPATAGIFAGAGM). The Cytoplasmic portion of the chain corresponds to 305–317 (SSELRKPSKSIPK). The chain crosses the membrane as a helical span at residues 318-338 (GTLWGLLFTFICYAVVVFSMG). The Vacuolar segment spans residues 339–360 (CSIPRRSLYDEVQIIQTISSVQ). The helical transmembrane segment at 361–381 (WVIFMGEMATSLFSIIVGMLG) threads the bilayer. The Cytoplasmic portion of the chain corresponds to 382–393 (AAYVLEAIAKDN). The chain crosses the membrane as a helical span at residues 394 to 414 (IIPGLEIFAHSPLYSLIFTWI). The Vacuolar portion of the chain corresponds to 415-430 (LTQLCLFSDVNKIATF). The chain crosses the membrane as a helical span at residues 431 to 451 (ITMTFLMTFVVMNLACFLLGI). Residues 452-462 (SSAPNFRPSFK) are Cytoplasmic-facing. The helical transmembrane segment at 463–482 (YFNRYTTAIGALLSVVAMLI) threads the bilayer. Over 483 to 487 (VDGIS) the chain is Vacuolar. Residues 488 to 506 (ASVLFLAMILLFLFIHYFS) traverse the membrane as a helical segment. Residues 507-1120 (PPKSWGDVSQ…SQTMTVTTAL (614 aa)) are Cytoplasmic-facing. A phosphoserine mark is found at serine 654, serine 915, and serine 918.

This sequence belongs to the SLC12A transporter family.

The protein resides in the vacuole membrane. Catalyzes the coordinated symport of chloride with potassium ions across the vacuolar membrane. Involved in vacuolar osmoregulation. The protein is Vacuolar cation-chloride cotransporter 1 of Saccharomyces cerevisiae (strain ATCC 204508 / S288c) (Baker's yeast).